The chain runs to 411 residues: Tyrosine--tRNA ligase (411 aa).

An L-tyrosine-binding site is contributed by Tyr-34. The 'HIGH' region signature appears at 39–48 (CTATSLHIGS). L-tyrosine contacts are provided by Tyr-171 and Gln-175. A 'KMSKS' region motif is present at residues 231–235 (KMGKT). Lys-234 is a binding site for ATP. Residues 345–411 (ISAYNLFYNA…GKKRHILVKV (67 aa)) form the S4 RNA-binding domain.

The protein belongs to the class-I aminoacyl-tRNA synthetase family. TyrS type 1 subfamily. Homodimer.

The protein resides in the cytoplasm. It carries out the reaction tRNA(Tyr) + L-tyrosine + ATP = L-tyrosyl-tRNA(Tyr) + AMP + diphosphate + H(+). Its function is as follows. Catalyzes the attachment of tyrosine to tRNA(Tyr) in a two-step reaction: tyrosine is first activated by ATP to form Tyr-AMP and then transferred to the acceptor end of tRNA(Tyr). The polypeptide is Tyrosine--tRNA ligase (Rickettsia prowazekii (strain Madrid E)).